The primary structure comprises 333 residues: Chitinase-like protein 2 (333 aa).

The signal sequence occupies residues 1-27; that stretch reads MVSKPLFSLLLLTVALVVFQTGTLVNA. Cysteine 50 and cysteine 56 form a disulfide bridge. Residue asparagine 65 is glycosylated (N-linked (GlcNAc...) asparagine). Cysteine 165 and cysteine 175 are oxidised to a cystine. Asparagine 216 and asparagine 252 each carry an N-linked (GlcNAc...) asparagine glycan. A disulfide bridge connects residues cysteine 275 and cysteine 313. The tract at residues 307-333 is disordered; that stretch reads PHEKLSCADQEPFSSSSSAPPSSGSSS. Low complexity predominate over residues 320-333; the sequence is SSSSSAPPSSGSSS.

This sequence belongs to the glycosyl hydrolase 19 family. In terms of tissue distribution, mostly expressed in stems, especially in xylem and interfascicular fibers.

The protein resides in the secreted. In terms of biological role, no chitinase activity. Required for proper cell wall biosynthesis in etiolated seedlings. Prevents lignin accumulation in hypocotyls. The protein is Chitinase-like protein 2 (CTL2) of Arabidopsis thaliana (Mouse-ear cress).